We begin with the raw amino-acid sequence, 82 residues long: MDELDIAFFILPLGIMLLSIVGTCICKNPYLMPMLSLVISLVLTFTIFNQSFLGWAVVYSLVSLALSYITLIVVRKRKESGN.

Transmembrane regions (helical) follow at residues 4–26 (LDIA…TCIC), 31–48 (LMPM…FTIF), and 52–74 (FLGW…LIVV).

It is found in the cell membrane. This is an uncharacterized protein from Bacillus subtilis (strain 168).